Consider the following 478-residue polypeptide: Protein nucleotidyltransferase YdiU (478 aa).

Gly84, Gly86, Arg87, Lys107, Asp119, Gly120, Arg170, and Arg177 together coordinate ATP. Catalysis depends on Asp246, which acts as the Proton acceptor. Residues Asn247 and Asp256 each coordinate Mg(2+). Residue Asp256 coordinates ATP.

This sequence belongs to the SELO family. The cofactor is Mg(2+). Mn(2+) is required as a cofactor.

It catalyses the reaction L-seryl-[protein] + ATP = 3-O-(5'-adenylyl)-L-seryl-[protein] + diphosphate. It carries out the reaction L-threonyl-[protein] + ATP = 3-O-(5'-adenylyl)-L-threonyl-[protein] + diphosphate. The catalysed reaction is L-tyrosyl-[protein] + ATP = O-(5'-adenylyl)-L-tyrosyl-[protein] + diphosphate. The enzyme catalyses L-histidyl-[protein] + UTP = N(tele)-(5'-uridylyl)-L-histidyl-[protein] + diphosphate. It catalyses the reaction L-seryl-[protein] + UTP = O-(5'-uridylyl)-L-seryl-[protein] + diphosphate. It carries out the reaction L-tyrosyl-[protein] + UTP = O-(5'-uridylyl)-L-tyrosyl-[protein] + diphosphate. Its function is as follows. Nucleotidyltransferase involved in the post-translational modification of proteins. It can catalyze the addition of adenosine monophosphate (AMP) or uridine monophosphate (UMP) to a protein, resulting in modifications known as AMPylation and UMPylation. The polypeptide is Protein nucleotidyltransferase YdiU (Shigella sonnei (strain Ss046)).